A 179-amino-acid polypeptide reads, in one-letter code: Large ribosomal subunit protein uL5 (179 aa).

Belongs to the universal ribosomal protein uL5 family. In terms of assembly, part of the 50S ribosomal subunit; part of the 5S rRNA/L5/L18/L25 subcomplex. Contacts the 5S rRNA and the P site tRNA. Forms a bridge to the 30S subunit in the 70S ribosome.

Its function is as follows. This is one of the proteins that bind and probably mediate the attachment of the 5S RNA into the large ribosomal subunit, where it forms part of the central protuberance. In the 70S ribosome it contacts protein S13 of the 30S subunit (bridge B1b), connecting the 2 subunits; this bridge is implicated in subunit movement. Contacts the P site tRNA; the 5S rRNA and some of its associated proteins might help stabilize positioning of ribosome-bound tRNAs. The polypeptide is Large ribosomal subunit protein uL5 (Caldanaerobacter subterraneus subsp. tengcongensis (strain DSM 15242 / JCM 11007 / NBRC 100824 / MB4) (Thermoanaerobacter tengcongensis)).